The following is a 302-amino-acid chain: Oligopeptide transport system permease protein OppC (302 aa).

At 1-39 the chain is on the cytoplasmic side; sequence MMLSKKNSETLENFSEKLEVEGRSLWQDARRRFMHNRAA. The helical transmembrane segment at 40–62 threads the bilayer; sequence VASLIVLFLIALFVTVAPMLSQF. Residues 63–102 are Periplasmic-facing; sequence TYFDTDWGMMSSAPDMASGHYFGTDSSGRDLLVRVAIGGR. One can recognise an ABC transmembrane type-1 domain in the interval 101-290; it reads GRISLMVGIA…VTLFCFNFIG (190 aa). The chain crosses the membrane as a helical span at residues 103–125; it reads ISLMVGIAAALVAVIVGTLYGSL. At 126–137 the chain is on the cytoplasmic side; sequence SGYLGGKIDSVM. Residues 138 to 160 form a helical membrane-spanning segment; it reads MRLLEILNSFPFMFFVILLVTFF. Over 161–163 the chain is Periplasmic; sequence GQN. Residues 164–183 form a helical membrane-spanning segment; sequence ILLIFVAIGMVSWLDMARIV. Over 184-213 the chain is Cytoplasmic; the sequence is RGQTLSLKRKEFIEAAQVGGVSTASIVIRH. A helical membrane pass occupies residues 214 to 236; that stretch reads IVPNVLGVVVVYASLLVPSMILF. Residues 237 to 267 lie on the Periplasmic side of the membrane; it reads ESFLSFLGLGTQEPLSSWGALLSDGANSMEV. Residues 268 to 290 traverse the membrane as a helical segment; that stretch reads SPWLLLFPAGFLVVTLFCFNFIG. Residues 291-302 are Cytoplasmic-facing; sequence DGLRDALDPKDR.

It belongs to the binding-protein-dependent transport system permease family. OppBC subfamily. As to quaternary structure, the complex is composed of two ATP-binding proteins (OppD and OppF), two transmembrane proteins (OppB and OppC) and a solute-binding protein (OppA).

The protein localises to the cell inner membrane. In terms of biological role, part of the ABC transporter complex OppABCDF involved in the uptake of oligopeptides, including the cell wall murein tripeptide L-alanyl-gamma-D-glutamyl-meso-diaminopimelate. Responsible for the translocation of the substrate across the membrane. Plays an important nutritional role and is involved in the recycling of cell wall peptides. This Salmonella typhimurium (strain LT2 / SGSC1412 / ATCC 700720) protein is Oligopeptide transport system permease protein OppC.